Reading from the N-terminus, the 81-residue chain is Cytotoxin 4a (81 aa).

An N-terminal signal peptide occupies residues 1–21; that stretch reads MKTLLLTLVVVTIVCLDLGYT. 4 disulfides stabilise this stretch: C24-C42, C35-C59, C63-C74, and C75-C80.

It belongs to the three-finger toxin family. Short-chain subfamily. Type IA cytotoxin sub-subfamily. As to quaternary structure, monomer in solution; Homodimer and oligomer in the presence of negatively charged lipids forming a pore with a size ranging between 20 and 30 Angstroms. Expressed by the venom gland.

Its subcellular location is the secreted. It is found in the target cell membrane. In terms of biological role, shows cytolytic activity on many different cells by forming pore in lipid membranes. In vivo, increases heart rate or kills the animal by cardiac arrest. In addition, it binds to heparin with high affinity, interacts with Kv channel-interacting protein 1 (KCNIP1) in a calcium-independent manner, and binds to integrin alpha-V/beta-3 (ITGAV/ITGB3) with moderate affinity. In Naja sputatrix (Malayan spitting cobra), this protein is Cytotoxin 4a.